The sequence spans 937 residues: Isoleucine--tRNA ligase (937 aa).

A 'HIGH' region motif is present at residues 58-68 (PYANGNIHIGH). Glutamate 560 is a binding site for L-isoleucyl-5'-AMP. A 'KMSKS' region motif is present at residues 601–605 (KMSKS). Lysine 604 is a binding site for ATP. Zn(2+)-binding residues include cysteine 900, cysteine 903, cysteine 920, and cysteine 923.

Belongs to the class-I aminoacyl-tRNA synthetase family. IleS type 1 subfamily. As to quaternary structure, monomer. The cofactor is Zn(2+).

The protein localises to the cytoplasm. It carries out the reaction tRNA(Ile) + L-isoleucine + ATP = L-isoleucyl-tRNA(Ile) + AMP + diphosphate. Its function is as follows. Catalyzes the attachment of isoleucine to tRNA(Ile). As IleRS can inadvertently accommodate and process structurally similar amino acids such as valine, to avoid such errors it has two additional distinct tRNA(Ile)-dependent editing activities. One activity is designated as 'pretransfer' editing and involves the hydrolysis of activated Val-AMP. The other activity is designated 'posttransfer' editing and involves deacylation of mischarged Val-tRNA(Ile). The polypeptide is Isoleucine--tRNA ligase (Thioalkalivibrio sulfidiphilus (strain HL-EbGR7)).